The sequence spans 450 residues: tRNA modification GTPase MnmE (450 aa).

(6S)-5-formyl-5,6,7,8-tetrahydrofolate-binding residues include Arg-23, Glu-80, and Arg-123. The TrmE-type G domain occupies 219–372 (GLHVVLAGQP…LRARLLQMAG (154 aa)). Asn-229 is a K(+) binding site. Residues 229-234 (NVGKSS), 248-254 (TPIAGTT), and 273-276 (DTAG) each bind GTP. Mg(2+) is bound at residue Ser-233. Residues Thr-248, Ile-250, and Thr-253 each coordinate K(+). A Mg(2+)-binding site is contributed by Thr-254. Residue Lys-450 coordinates (6S)-5-formyl-5,6,7,8-tetrahydrofolate.

This sequence belongs to the TRAFAC class TrmE-Era-EngA-EngB-Septin-like GTPase superfamily. TrmE GTPase family. Homodimer. Heterotetramer of two MnmE and two MnmG subunits. Requires K(+) as cofactor.

The protein localises to the cytoplasm. In terms of biological role, exhibits a very high intrinsic GTPase hydrolysis rate. Involved in the addition of a carboxymethylaminomethyl (cmnm) group at the wobble position (U34) of certain tRNAs, forming tRNA-cmnm(5)s(2)U34. The chain is tRNA modification GTPase MnmE from Bordetella avium (strain 197N).